Reading from the N-terminus, the 275-residue chain is 2,3,4,5-tetrahydropyridine-2,6-dicarboxylate N-succinyltransferase (275 aa).

Residues arginine 108 and aspartate 145 each contribute to the substrate site.

This sequence belongs to the transferase hexapeptide repeat family. As to quaternary structure, homotrimer.

The protein resides in the cytoplasm. The catalysed reaction is (S)-2,3,4,5-tetrahydrodipicolinate + succinyl-CoA + H2O = (S)-2-succinylamino-6-oxoheptanedioate + CoA. It functions in the pathway amino-acid biosynthesis; L-lysine biosynthesis via DAP pathway; LL-2,6-diaminopimelate from (S)-tetrahydrodipicolinate (succinylase route): step 1/3. This Ruegeria pomeroyi (strain ATCC 700808 / DSM 15171 / DSS-3) (Silicibacter pomeroyi) protein is 2,3,4,5-tetrahydropyridine-2,6-dicarboxylate N-succinyltransferase.